A 567-amino-acid polypeptide reads, in one-letter code: Hydrogenase-2 large chain (567 aa).

Ni(2+) is bound by residues C61, C64, C546, and C549. Positions 553-567 (VVDADGNEVVSVKVL) are excised as a propeptide.

It belongs to the [NiFe]/[NiFeSe] hydrogenase large subunit family. Heterodimer of a large and a small subunit. It depends on Ni(2+) as a cofactor.

The protein localises to the cell membrane. The catalysed reaction is H2 + A = AH2. This is one of three E.coli hydrogenases synthesized in response to different physiological conditions. HYD2 is involved in hydrogen uptake. This is Hydrogenase-2 large chain (hybC) from Escherichia coli O157:H7.